The following is a 41-amino-acid chain: Photosystem I reaction center subunit IX (41 aa).

The chain crosses the membrane as a helical span at residues 7–27 (YLSTAPVVAFAWITITAGLLI).

The protein belongs to the PsaJ family.

Its subcellular location is the plastid. The protein localises to the chloroplast thylakoid membrane. Functionally, may help in the organization of the PsaE and PsaF subunits. The polypeptide is Photosystem I reaction center subunit IX (Oedogonium cardiacum (Filamentous green alga)).